A 518-amino-acid polypeptide reads, in one-letter code: G-protein coupled receptor 161 (518 aa).

Topologically, residues 1–26 (MNSSSDGANEGAGAAADNGPTKVAES) are extracellular. An N-linked (GlcNAc...) asparagine glycan is attached at Asn-2. The chain crosses the membrane as a helical span at residues 27-47 (IAIIIIDILICLGNLVIVVTL). Over 48 to 59 (YKKSYLLSLSNK) the chain is Cytoplasmic. A helical transmembrane segment spans residues 60–80 (FVFSLTFSNLLLSMLVLPFVV). Topologically, residues 81–97 (VSSILREWIFGVVWCNF) are extracellular. Cys-95 and Cys-173 are joined by a disulfide. A glycan (N-linked (GlcNAc...) asparagine) is linked at Asn-96. Residues 98–118 (SALLYMLISSASMLTLGIIAI) traverse the membrane as a helical segment. At 119–138 (DRYYAVLYPMVYPMKITGNR) the chain is on the cytoplasmic side. The chain crosses the membrane as a helical span at residues 139–159 (AVLALVYVWLHSLIGCLPPLF). Residues 160–185 (GWSTLEFDHFKWMCVAAWHKEAGYTA) lie on the Extracellular side of the membrane. The helical transmembrane segment at 186 to 206 (FWQVWCALLPFIVMMICYGFI) threads the bilayer. The Cytoplasmic portion of the chain corresponds to 207–264 (FRVARIKARKIHCGTVIIVQEASQKNGRKNSSTSTSSSGSRKNGFSSIVYSANQCKAL). The helical transmembrane segment at 265 to 285 (ITILVVIGAFVLTWGPYMIVI) threads the bilayer. Topologically, residues 286-301 (STEALKGKNSVSPVLE) are extracellular. Residues 302–322 (TLATWLSFTSAICHPLIYGLW) traverse the membrane as a helical segment. At 323-518 (NKTVRKELLG…GNIETSKCDV (196 aa)) the chain is on the cytoplasmic side. Positions 429 to 448 (EVEQKNDARTMPTQPTAPSE) are disordered. A compositionally biased stretch (polar residues) spans 439–448 (MPTQPTAPSE).

It belongs to the G-protein coupled receptor 1 family.

Its subcellular location is the cell projection. It localises to the cilium membrane. The protein localises to the cell membrane. In terms of biological role, key negative regulator of Shh signaling during neural tube development. Recruited to primary cilia and acts as a regulator of the PKA-dependent basal repression machinery in Shh signaling by increasing cAMP levels, leading to promote the PKA-dependent processing of gli3 into gli3r and repress the Shh signaling. In presence of shh, it is removed from primary cilia, preventing its activity and allowing activation of the Shh signaling. The polypeptide is G-protein coupled receptor 161 (gpr161) (Xenopus tropicalis (Western clawed frog)).